The primary structure comprises 395 residues: Succinyl-diaminopimelate desuccinylase (395 aa).

Position 74 (histidine 74) interacts with Zn(2+). The active site involves aspartate 76. Residue aspartate 107 coordinates Zn(2+). Glutamate 141 (proton acceptor) is an active-site residue. Zn(2+)-binding residues include glutamate 142, glutamate 170, and histidine 368.

Belongs to the peptidase M20A family. DapE subfamily. As to quaternary structure, homodimer. The cofactor is Zn(2+). Requires Co(2+) as cofactor.

The catalysed reaction is N-succinyl-(2S,6S)-2,6-diaminopimelate + H2O = (2S,6S)-2,6-diaminopimelate + succinate. The protein operates within amino-acid biosynthesis; L-lysine biosynthesis via DAP pathway; LL-2,6-diaminopimelate from (S)-tetrahydrodipicolinate (succinylase route): step 3/3. Catalyzes the hydrolysis of N-succinyl-L,L-diaminopimelic acid (SDAP), forming succinate and LL-2,6-diaminopimelate (DAP), an intermediate involved in the bacterial biosynthesis of lysine and meso-diaminopimelic acid, an essential component of bacterial cell walls. The chain is Succinyl-diaminopimelate desuccinylase from Brucella melitensis biotype 1 (strain ATCC 23456 / CCUG 17765 / NCTC 10094 / 16M).